The following is a 133-amino-acid chain: Mitochondrial import inner membrane translocase subunit TIM17-3 (133 aa).

Helical transmembrane passes span Ile-15–Phe-35, Gly-63–Ile-83, Trp-90–Ile-105, and Ser-115–Pro-128.

The protein belongs to the Tim17/Tim22/Tim23 family. Component of the TIM17:23 complex at least composed of TIM23, TIM17 and TIM50. The complex interacts with the TIM44 component of the PAM complex. In terms of tissue distribution, expressed in cotyledons, roots, flowers and leaves.

It localises to the mitochondrion inner membrane. Essential component of the TIM17:23 complex, a complex that mediates the translocation of transit peptide-containing proteins across the mitochondrial inner membrane. Links the inner and outer membranes. The chain is Mitochondrial import inner membrane translocase subunit TIM17-3 (TIM17-3) from Arabidopsis thaliana (Mouse-ear cress).